Reading from the N-terminus, the 273-residue chain is Large ribosomal subunit protein uL2 (273 aa).

Residues 224–264 (AMNPVDHPHGGGEGRNFGKHPVTPWGIQTKGKKTRKNKRTD) form a disordered region. A compositionally biased stretch (basic residues) spans 253–264 (KGKKTRKNKRTD).

It belongs to the universal ribosomal protein uL2 family. As to quaternary structure, part of the 50S ribosomal subunit. Forms a bridge to the 30S subunit in the 70S ribosome.

Functionally, one of the primary rRNA binding proteins. Required for association of the 30S and 50S subunits to form the 70S ribosome, for tRNA binding and peptide bond formation. It has been suggested to have peptidyltransferase activity; this is somewhat controversial. Makes several contacts with the 16S rRNA in the 70S ribosome. In Buchnera aphidicola subsp. Acyrthosiphon pisum (strain 5A), this protein is Large ribosomal subunit protein uL2.